We begin with the raw amino-acid sequence, 459 residues long: N-chimaerin (459 aa).

Residue Ala2 is modified to N-acetylalanine. An SH2 domain is found at 49–135; sequence EFHGMISREA…IETKAAEYIA (87 aa). Residue Thr192 is modified to Phosphothreonine. The Phorbol-ester/DAG-type zinc finger occupies 205–255; the sequence is IHNFKVHTFRGPHWCEYCANFMWGLIAQGVKCADCGLNVHKQCSKMVPNDC. One can recognise a Rho-GAP domain in the interval 268 to 459; it reads CDLTTLVKAH…LLIKNEDILF (192 aa). Residue Thr340 is modified to Phosphothreonine.

In terms of assembly, interacts with EPHA4; effector of EPHA4 in axon guidance linking EPHA4 activation to RAC1 regulation. Phosphorylated. Phosphorylation is EPHA4 kinase activity-dependent. In neurons in brain regions that are involved in learning and memory processes.

Its function is as follows. GTPase-activating protein for p21-rac and a phorbol ester receptor. Involved in the assembly of neuronal locomotor circuits as a direct effector of EPHA4 in axon guidance. In Homo sapiens (Human), this protein is N-chimaerin (CHN1).